The primary structure comprises 47 residues: Accessory gland peptide Acp33A (47 aa).

The signal sequence occupies residues 1–21; sequence MLPSKRVPFLFTIILFLAGLG.

In terms of tissue distribution, main cells of accessory gland and seminal fluid.

Its subcellular location is the secreted. Responsible for physiological and behavioral changes in mated female flies. In Drosophila melanogaster (Fruit fly), this protein is Accessory gland peptide Acp33A (Acp33A).